We begin with the raw amino-acid sequence, 462 residues long: Arginine-specific demethylase JMJ20 (462 aa).

Positions 115–287 (VKEYPDYTAY…WVWDLLWKDY (173 aa)) constitute a JmjC domain. Residues His-177, Asp-179, and His-255 each coordinate Fe cation.

This sequence belongs to the JARID1 histone demethylase family. The cofactor is Fe(2+). As to expression, mostly expressed in leaves, and, to a lower extent, in inflorescences, roots, siliques and stems.

It localises to the nucleus. It catalyses the reaction N(omega),N(omega)-dimethyl-L-arginyl-[protein] + 2-oxoglutarate + O2 = N(omega)-methyl-L-arginyl-[protein] + formaldehyde + succinate + CO2. Histone demethylase that demethylates 'Arg-3' (H4R3me) of histone H4 with a specific activity for H4R3me2. Involved in the positive regulation of gene expression. Together with JMJ22, positively regulates seed germination by promoting the removal of repressive histone arginine methylations (e.g. H4R3me2) at GA3ox1 and GA3ox2 to trigger gibberellic acid (GA) biosynthesis. The chain is Arginine-specific demethylase JMJ20 from Arabidopsis thaliana (Mouse-ear cress).